The following is a 244-amino-acid chain: tRNA pseudouridine synthase A (244 aa).

Asp52 acts as the Nucleophile in catalysis. Tyr111 is a substrate binding site.

Belongs to the tRNA pseudouridine synthase TruA family. As to quaternary structure, homodimer.

The enzyme catalyses uridine(38/39/40) in tRNA = pseudouridine(38/39/40) in tRNA. In terms of biological role, formation of pseudouridine at positions 38, 39 and 40 in the anticodon stem and loop of transfer RNAs. The polypeptide is tRNA pseudouridine synthase A (Thermosipho africanus (strain TCF52B)).